The sequence spans 229 residues: MYDIKKWKHVFKLDPAKTISDEDLDKICMSETDAIIIGGTDNVTEDNVIQLMSRVRRYPLPLVLEISNLESTMPGFDFYFAPMVLNSRDVTYHNGILLEALKEYGHMMDFDEVIFQGYVVLNPDSKVAEKTQANTDIDTQDIEAYALMTDKVYRFPIMYIEYSGTFGDMEKVRAAKDNLEEAHIFYGGGISSISDAKAAAGVADTIVVGNLVYNDIKQALKTVKIKGKS.

Residue Lys-12 coordinates sn-glycerol 1-phosphate. Asp-14 and Thr-40 together coordinate Mg(2+). Sn-glycerol 1-phosphate contacts are provided by residues 159 to 164, Gly-189, and 209 to 210; these read YIEYSG and GN.

It belongs to the GGGP/HepGP synthase family. Group I subfamily. In terms of assembly, homodimer. Mg(2+) is required as a cofactor.

The catalysed reaction is sn-glycerol 1-phosphate + all-trans-heptaprenyl diphosphate = 3-heptaprenyl-sn-glycero-1-phosphate + diphosphate. It participates in membrane lipid metabolism; glycerophospholipid metabolism. Functionally, prenyltransferase that catalyzes in vivo the transfer of the heptaprenyl moiety of heptaprenyl pyrophosphate (HepPP; 35 carbon atoms) to the C3 hydroxyl of sn-glycerol-1-phosphate (G1P), producing heptaprenylglyceryl phosphate (HepGP). This reaction is an ether-bond-formation step in the biosynthesis of archaea-type G1P-based membrane lipids found in Bacillales. This Staphylococcus carnosus (strain TM300) protein is Heptaprenylglyceryl phosphate synthase.